The chain runs to 366 residues: Subtilisin-like protease het-Q2 (366 aa).

The Peptidase S8 domain occupies 1–321; it reads MSAISHHSLS…RVLMALGEKT (321 aa). Residue D35 is the Charge relay system of the active site. The interval 79-98 is disordered; it reads DFCQPSPPGDRQGPPPQPHS. The segment covering 83–96 has biased composition (pro residues); sequence PSPPGDRQGPPPQP. Catalysis depends on charge relay system residues H105 and S266. Residues 261-283 traverse the membrane as a helical segment; sequence LVSGSSFATPVVVSVAALVLAFV.

This sequence belongs to the peptidase S8 family.

It is found in the membrane. Functionally, serine protease involved in heterokaryon incompatibility, a process that ensures that during spontaneous vegetative cell fusion, only compatible cells from the same colony survive (non-self-recognition). In P.anserina, the het-q locus exists as 2 incompatible alleles, het-Q1 (AC B2AXJ5) and het-Q2 (this entry). Prevents cell fusion with strains containing the gasdermin-like protein het-Q1 by mediating proteolytic cleavage and maturation of het-Q1 during the allorecognition process, thereby triggering cell death. The polypeptide is Subtilisin-like protease het-Q2 (Podospora anserina (Pleurage anserina)).